Here is a 337-residue protein sequence, read N- to C-terminus: Anthranilate phosphoribosyltransferase (337 aa).

5-phospho-alpha-D-ribose 1-diphosphate-binding positions include G81, 84–85 (GD), S89, 91–94 (NVST), 109–117 (KHGNRAATS), and A121. G81 contributes to the anthranilate binding site. A Mg(2+)-binding site is contributed by S93. Anthranilate is bound at residue N112. R167 contacts anthranilate. Mg(2+)-binding residues include D226 and E227.

The protein belongs to the anthranilate phosphoribosyltransferase family. In terms of assembly, homodimer. Mg(2+) serves as cofactor.

The catalysed reaction is N-(5-phospho-beta-D-ribosyl)anthranilate + diphosphate = 5-phospho-alpha-D-ribose 1-diphosphate + anthranilate. The protein operates within amino-acid biosynthesis; L-tryptophan biosynthesis; L-tryptophan from chorismate: step 2/5. Functionally, catalyzes the transfer of the phosphoribosyl group of 5-phosphorylribose-1-pyrophosphate (PRPP) to anthranilate to yield N-(5'-phosphoribosyl)-anthranilate (PRA). The sequence is that of Anthranilate phosphoribosyltransferase from Methylorubrum extorquens (strain PA1) (Methylobacterium extorquens).